We begin with the raw amino-acid sequence, 249 residues long: 3-deoxy-manno-octulosonate cytidylyltransferase (249 aa).

It belongs to the KdsB family.

The protein localises to the cytoplasm. It catalyses the reaction 3-deoxy-alpha-D-manno-oct-2-ulosonate + CTP = CMP-3-deoxy-beta-D-manno-octulosonate + diphosphate. Its pathway is nucleotide-sugar biosynthesis; CMP-3-deoxy-D-manno-octulosonate biosynthesis; CMP-3-deoxy-D-manno-octulosonate from 3-deoxy-D-manno-octulosonate and CTP: step 1/1. It functions in the pathway bacterial outer membrane biogenesis; lipopolysaccharide biosynthesis. In terms of biological role, activates KDO (a required 8-carbon sugar) for incorporation into bacterial lipopolysaccharide in Gram-negative bacteria. This chain is 3-deoxy-manno-octulosonate cytidylyltransferase, found in Oleidesulfovibrio alaskensis (strain ATCC BAA-1058 / DSM 17464 / G20) (Desulfovibrio alaskensis).